Reading from the N-terminus, the 489-residue chain is GTPase Der (489 aa).

EngA-type G domains follow at residues 3–166 (PVVA…FDDV) and 201–374 (IKLA…DSST). GTP-binding positions include 9-16 (GRPNVGKS), 56-60 (DTGGI), 118-121 (NKTD), 207-214 (GRPNVGKS), 254-258 (DTAGV), and 319-322 (NKWD). The region spanning 375–459 (KRISTSILTR…PIRIEFREGT (85 aa)) is the KH-like domain.

It belongs to the TRAFAC class TrmE-Era-EngA-EngB-Septin-like GTPase superfamily. EngA (Der) GTPase family. Associates with the 50S ribosomal subunit.

GTPase that plays an essential role in the late steps of ribosome biogenesis. The sequence is that of GTPase Der from Psychromonas ingrahamii (strain DSM 17664 / CCUG 51855 / 37).